The following is a 360-amino-acid chain: DNA replication and repair protein RecF (360 aa).

33 to 40 (GENGSGKT) is an ATP binding site.

Belongs to the RecF family.

It is found in the cytoplasm. The RecF protein is involved in DNA metabolism; it is required for DNA replication and normal SOS inducibility. RecF binds preferentially to single-stranded, linear DNA. It also seems to bind ATP. The polypeptide is DNA replication and repair protein RecF (Rickettsia canadensis (strain McKiel)).